Consider the following 434-residue polypeptide: ATP phosphoribosyltransferase regulatory subunit (434 aa).

The tract at residues 1-48 is disordered; sequence MYGRGSGAEHSRGSGAEHFWDPRPEASSTVSSSLRPPSGARDLLPREV. A compositionally biased stretch (low complexity) spans 27–38; that stretch reads SSTVSSSLRPPS.

The protein belongs to the class-II aminoacyl-tRNA synthetase family. HisZ subfamily. In terms of assembly, heteromultimer composed of HisG and HisZ subunits.

The protein localises to the cytoplasm. It functions in the pathway amino-acid biosynthesis; L-histidine biosynthesis; L-histidine from 5-phospho-alpha-D-ribose 1-diphosphate: step 1/9. In terms of biological role, required for the first step of histidine biosynthesis. May allow the feedback regulation of ATP phosphoribosyltransferase activity by histidine. This is ATP phosphoribosyltransferase regulatory subunit from Synechococcus sp. (strain JA-2-3B'a(2-13)) (Cyanobacteria bacterium Yellowstone B-Prime).